Here is a 64-residue protein sequence, read N- to C-terminus: Bubble protein (64 aa).

Disulfide bonds link C3-C30, C18-C38, C28-C54, and C49-C64.

The protein localises to the secreted. May act as a toxin. May recognize a molecule or part of a molecule with a negatively charged surface potential. This Penicillium brevicompactum protein is Bubble protein.